The sequence spans 461 residues: L-seryl-tRNA(Sec) selenium transferase (461 aa).

The residue at position 291 (lysine 291) is an N6-(pyridoxal phosphate)lysine.

This sequence belongs to the SelA family. Requires pyridoxal 5'-phosphate as cofactor.

The protein resides in the cytoplasm. The enzyme catalyses L-seryl-tRNA(Sec) + selenophosphate + H(+) = L-selenocysteinyl-tRNA(Sec) + phosphate. Its pathway is aminoacyl-tRNA biosynthesis; selenocysteinyl-tRNA(Sec) biosynthesis; selenocysteinyl-tRNA(Sec) from L-seryl-tRNA(Sec) (bacterial route): step 1/1. In terms of biological role, converts seryl-tRNA(Sec) to selenocysteinyl-tRNA(Sec) required for selenoprotein biosynthesis. The polypeptide is L-seryl-tRNA(Sec) selenium transferase (Caldanaerobacter subterraneus subsp. tengcongensis (strain DSM 15242 / JCM 11007 / NBRC 100824 / MB4) (Thermoanaerobacter tengcongensis)).